A 266-amino-acid polypeptide reads, in one-letter code: Glucosamine-6-phosphate deaminase (266 aa).

The Proton acceptor; for enolization step role is filled by Asp-72. The For ring-opening step role is filled by Asp-141. The active-site Proton acceptor; for ring-opening step is the His-143. The For ring-opening step role is filled by Glu-148.

Belongs to the glucosamine/galactosamine-6-phosphate isomerase family. NagB subfamily. As to quaternary structure, homohexamer.

The catalysed reaction is alpha-D-glucosamine 6-phosphate + H2O = beta-D-fructose 6-phosphate + NH4(+). Its pathway is amino-sugar metabolism; N-acetylneuraminate degradation; D-fructose 6-phosphate from N-acetylneuraminate: step 5/5. Its activity is regulated as follows. Allosterically activated by N-acetylglucosamine 6-phosphate (GlcNAc6P). Catalyzes the reversible isomerization-deamination of glucosamine 6-phosphate (GlcN6P) to form fructose 6-phosphate (Fru6P) and ammonium ion. The protein is Glucosamine-6-phosphate deaminase of Vibrio vulnificus (strain CMCP6).